Reading from the N-terminus, the 102-residue chain is NADH-quinone oxidoreductase subunit K (102 aa).

Transmembrane regions (helical) follow at residues 6–26 (MEHG…GLLI), 30–50 (LLFI…AFVV), and 65–85 (ILVI…LLLL).

Belongs to the complex I subunit 4L family. As to quaternary structure, NDH-1 is composed of 14 different subunits. Subunits NuoA, H, J, K, L, M, N constitute the membrane sector of the complex.

It is found in the cell inner membrane. The enzyme catalyses a quinone + NADH + 5 H(+)(in) = a quinol + NAD(+) + 4 H(+)(out). NDH-1 shuttles electrons from NADH, via FMN and iron-sulfur (Fe-S) centers, to quinones in the respiratory chain. The immediate electron acceptor for the enzyme in this species is believed to be ubiquinone. Couples the redox reaction to proton translocation (for every two electrons transferred, four hydrogen ions are translocated across the cytoplasmic membrane), and thus conserves the redox energy in a proton gradient. The polypeptide is NADH-quinone oxidoreductase subunit K (Aeromonas salmonicida (strain A449)).